A 536-amino-acid polypeptide reads, in one-letter code: Alpha-1,3-mannosyl-glycoprotein 4-beta-N-acetylglucosaminyltransferase A (536 aa).

Topologically, residues Met-1–Gly-6 are cytoplasmic. The chain crosses the membrane as a helical; Signal-anchor for type II membrane protein span at residues Thr-7 to Trp-27. Residues Gln-28 to Arg-54 adopt a coiled-coil conformation. Residues Gln-28–Asp-536 are Lumenal-facing. N-linked (GlcNAc...) asparagine glycosylation is found at Asn-77 and Asn-458.

It belongs to the glycosyltransferase 54 family. Requires a divalent metal cation as cofactor. In terms of processing, N-glycosylated.

It is found in the golgi apparatus membrane. The protein resides in the secreted. It carries out the reaction N(4)-{beta-D-GlcNAc-(1-&gt;2)-alpha-D-Man-(1-&gt;3)-[beta-D-GlcNAc-(1-&gt;2)-alpha-D-Man-(1-&gt;6)]-beta-D-Man-(1-&gt;4)-beta-D-GlcNAc-(1-&gt;4)-beta-D-GlcNAc}-L-asparaginyl-[protein] + UDP-N-acetyl-alpha-D-glucosamine = N(4)-{beta-D-GlcNAc-(1-&gt;2)-[beta-D-GlcNAc-(1-&gt;4)]-alpha-D-Man-(1-&gt;3)-[beta-D-GlcNAc-(1-&gt;2)-alpha-D-Man-(1-&gt;6)]-beta-D-Man-(1-&gt;4)-beta-D-GlcNAc-(1-&gt;4)-beta-D-GlcNAc}-L-asparaginyl-[protein] + UDP + H(+). It catalyses the reaction an N(4)-{beta-D-GlcNAc-(1-&gt;2)-alpha-D-Man-(1-&gt;3)-[alpha-D-Man-(1-&gt;6)]-beta-D-Man-(1-&gt;4)-beta-D-GlcNAc-(1-&gt;4)-beta-D-GlcNAc}-L-asparaginyl-[protein] + UDP-N-acetyl-alpha-D-glucosamine = an N(4)-{beta-D-GlcNAc-(1-&gt;2)-[beta-D-GlcNAc-(1-&gt;4)]-alpha-D-Man-(1-&gt;3)-[alpha-D-Man-(1-&gt;6)]-beta-D-Man-(1-&gt;4)-beta-D-GlcNAc-(1-&gt;4)-beta-D-GlcNAc}-L-asparaginyl-[protein] + UDP + H(+). The enzyme catalyses an N(4)-{beta-D-GlcNAc-(1-&gt;2)-alpha-D-Man-(1-&gt;3)-[beta-D-GlcNAc-(1-&gt;2)-[beta-D-GlcNAc-(1-&gt;6)]-alpha-D-Man-(1-&gt;6)]-beta-D-Man-(1-&gt;4)-beta-D-GlcNAc-(1-&gt;4)-beta-D-GlcNAc}-L-asparaginyl-[protein] + UDP-N-acetyl-alpha-D-glucosamine = an N(4)-{beta-D-GlcNAc-(1-&gt;2)-[beta-D-GlcNAc-(1-&gt;4)]-alpha-D-Man-(1-&gt;3)-[beta-D-GlcNAc-(1-&gt;2)-[beta-D-GlcNAc-(1-&gt;6)]-alpha-D-Man-(1-&gt;6)]-beta-D-Man-(1-&gt;4)-beta-D-GlcNAc-(1-&gt;4)-beta-D-GlcNAc}-L-asparaginyl-[protein] + UDP + H(+). The catalysed reaction is an N(4)-{beta-D-GlcNAc-(1-&gt;2)-alpha-D-Man-(1-&gt;3)-[beta-D-GlcNAc-(1-&gt;2)-alpha-D-Man-(1-&gt;6)]-beta-D-Man-(1-&gt;4)-beta-D-GlcNAc-(1-&gt;4)-[alpha-L-Fuc-(1-&gt;6)]-beta-D-GlcNAc}-L-asparaginyl-[protein] + UDP-N-acetyl-alpha-D-glucosamine = N(4)-{beta-D-GlcNAc-(1-&gt;2)-[beta-D-GlcNAc-(1-&gt;4)]-alpha-D-Man-(1-&gt;3)-[beta-D-GlcNAc-(1-&gt;2)-alpha-D-Man-(1-&gt;6)]-beta-D-Man-(1-&gt;4)-beta-D-GlcNAc-(1-&gt;4)-[alpha-L-Fuc-(1-&gt;6)]-beta-D-GlcNAc}-asparaginyl-[protein] + UDP + H(+). It carries out the reaction an N(4)-{beta-D-GlcNAc-(1-&gt;2)-alpha-D-Man-(1-&gt;3)-[beta-D-Gal-(1-&gt;4)-beta-D-GlcNAc-(1-&gt;2)-alpha-D-Man-(1-&gt;6)]-beta-D-Man-(1-&gt;4)-beta-D-GlcNAc-(1-&gt;4)-beta-D-GlcNAc}-L-asparaginyl-[protein] + UDP-N-acetyl-alpha-D-glucosamine = an N(4)-{beta-D-GlcNAc-(1-&gt;2)-[beta-D-GlcNAc-(1-&gt;4)]-alpha-D-Man-(1-&gt;3)-[beta-D-Gal-(1-&gt;4)-beta-D-GlcNAc-(1-&gt;2)-alpha-D-Man-(1-&gt;6)]-beta-D-Man-(1-&gt;4)-beta-D-GlcNAc-(1-&gt;4)-beta-D-GlcNAc}-L-asparaginyl-[protein] + UDP + H(+). It catalyses the reaction N(4)-{beta-D-GlcNAc-(1-&gt;2)-alpha-D-Man-(1-&gt;3)-[alpha-D-Man-(1-&gt;3)-{alpha-D-Man-(1-&gt;6)}-alpha-D-Man-(1-&gt;6)]-beta-D-Man-(1-&gt;4)-beta-D-GlcNAc-(1-&gt;4)-beta-D-GlcNAc}-asparaginyl-[protein] + UDP-N-acetyl-alpha-D-glucosamine = N(4)-{beta-D-GlcNAc-(1-&gt;2)-[beta-D-GlcNAc-(1-&gt;4)]-alpha-D-Man-(1-&gt;3)-[alpha-D-Man-(1-&gt;3)-{alpha-D-Man-(1-&gt;6)}-alpha-D-Man-(1-&gt;6)]-beta-D-Man-(1-&gt;4)-beta-D-GlcNAc-(1-&gt;4)-beta-D-GlcNAc}-asparaginyl-[protein] + UDP + H(+). The enzyme catalyses N(4)-{beta-D-GlcNAc-(1-&gt;2)-alpha-D-Man-(1-&gt;3)-beta-D-Man-(1-&gt;4)-beta-D-GlcNAc-(1-&gt;4)-beta-D-GlcNAc}-asparaginyl-[protein] + UDP-N-acetyl-alpha-D-glucosamine = N(4)-{beta-D-GlcNAc-(1-&gt;2)-[beta-D-GlcNAc-(1-&gt;4)]-alpha-D-Man-(1-&gt;3)-beta-D-Man-(1-&gt;4)-beta-D-GlcNAc-(1-&gt;4)-beta-D-GlcNAc}-asparaginyl-[protein] + UDP + H(+). It functions in the pathway protein modification; protein glycosylation. With respect to regulation, inhibited by UDP. Glycosyltransferase that catalyze the transfer of GlcNAc from UDP-GlcNAc to the GlcNAcbeta1-2Manalpha1-3 arm of the core structure of N-linked glycans through a beta1-4 linkage and participates in the production of tri- and tetra-antennary N-linked sugar chains. Involved in glucose transport by mediating SLC2A2/GLUT2 glycosylation, thereby controlling cell-surface expression of SLC2A2 in pancreatic beta cells. This Xenopus tropicalis (Western clawed frog) protein is Alpha-1,3-mannosyl-glycoprotein 4-beta-N-acetylglucosaminyltransferase A.